A 150-amino-acid chain; its full sequence is Transcription antitermination protein NusB (150 aa).

Belongs to the NusB family.

Its function is as follows. Involved in transcription antitermination. Required for transcription of ribosomal RNA (rRNA) genes. Binds specifically to the boxA antiterminator sequence of the ribosomal RNA (rrn) operons. This Streptococcus pyogenes serotype M2 (strain MGAS10270) protein is Transcription antitermination protein NusB.